Reading from the N-terminus, the 303-residue chain is MESALPSILTLVIIAEFIIGNLSNGFIVLINYIDWVSKRELSSVDKLLIILAISRIGLIWEILVSWFLALHYLAIFVSGTGLRIMIFSWIVSNHFSLWLATILSIFYLLKIASFSSPAFLYLKWRVNKVILMILLGSLVFLFLNLIQINIHIKDWLDRYEGNTTWNFSMSDFVTFSVSVKFTMTMFSLTPFTVALISFSLLIFSLQKHLQKMQLNYKGHREPRTKVHTNALKIVISFLLLYASFFLCILISWISELYQNTAIYMLCETIGLFYPSSHSFLLILGNPKLRQAFLLVAAKVWAKR.

Topologically, residues 1-7 are extracellular; it reads MESALPS. The chain crosses the membrane as a helical span at residues 8–28; that stretch reads ILTLVIIAEFIIGNLSNGFIV. Residues 29 to 55 are Cytoplasmic-facing; it reads LINYIDWVSKRELSSVDKLLIILAISR. The chain crosses the membrane as a helical span at residues 56 to 76; sequence IGLIWEILVSWFLALHYLAIF. Residues 77–85 are Extracellular-facing; sequence VSGTGLRIM. The chain crosses the membrane as a helical span at residues 86 to 106; the sequence is IFSWIVSNHFSLWLATILSIF. Residues 107-128 are Cytoplasmic-facing; it reads YLLKIASFSSPAFLYLKWRVNK. The chain crosses the membrane as a helical span at residues 129-149; that stretch reads VILMILLGSLVFLFLNLIQIN. Residues 150 to 184 are Extracellular-facing; that stretch reads IHIKDWLDRYEGNTTWNFSMSDFVTFSVSVKFTMT. N-linked (GlcNAc...) asparagine glycosylation is found at Asn162 and Asn166. The helical transmembrane segment at 185 to 205 threads the bilayer; it reads MFSLTPFTVALISFSLLIFSL. Topologically, residues 206–232 are cytoplasmic; that stretch reads QKHLQKMQLNYKGHREPRTKVHTNALK. A helical transmembrane segment spans residues 233-253; sequence IVISFLLLYASFFLCILISWI. Over 254 to 261 the chain is Extracellular; it reads SELYQNTA. A helical transmembrane segment spans residues 262 to 282; that stretch reads IYMLCETIGLFYPSSHSFLLI. Topologically, residues 283–303 are cytoplasmic; the sequence is LGNPKLRQAFLLVAAKVWAKR.

Belongs to the G-protein coupled receptor T2R family.

The protein resides in the membrane. Receptor that may play a role in the perception of bitterness and is gustducin-linked. May play a role in sensing the chemical composition of the gastrointestinal content. The activity of this receptor may stimulate alpha gustducin, mediate PLC-beta-2 activation and lead to the gating of TRPM5. The chain is Taste receptor type 2 member 13 (TAS2R13) from Pongo pygmaeus (Bornean orangutan).